We begin with the raw amino-acid sequence, 492 residues long: ATP synthase subunit beta, chloroplastic (492 aa).

170–177 is an ATP binding site; that stretch reads GGAGVGKT.

It belongs to the ATPase alpha/beta chains family. In terms of assembly, F-type ATPases have 2 components, CF(1) - the catalytic core - and CF(0) - the membrane proton channel. CF(1) has five subunits: alpha(3), beta(3), gamma(1), delta(1), epsilon(1). CF(0) has four main subunits: a(1), b(1), b'(1) and c(9-12).

The protein localises to the plastid. Its subcellular location is the chloroplast thylakoid membrane. The catalysed reaction is ATP + H2O + 4 H(+)(in) = ADP + phosphate + 5 H(+)(out). Produces ATP from ADP in the presence of a proton gradient across the membrane. The catalytic sites are hosted primarily by the beta subunits. This is ATP synthase subunit beta, chloroplastic from Huperzia lucidula (Shining clubmoss).